The chain runs to 329 residues: Basic leucine zipper 61 (329 aa).

Disordered regions lie at residues 1-22 (MAQL…FSSQ) and 98-204 (DDVH…HDPK). Positions 10-22 (TMTTPNWPDFSSQ) are enriched in polar residues. The span at 119 to 133 (PTRSSSNTSTPSDHN) shows a compositional bias: low complexity. Residues 139–154 (DNNKEAPPSDHDHHMD) show a composition bias toward basic and acidic residues. A compositionally biased stretch (low complexity) spans 155–169 (NNVANQNNAAGNNYN). In terms of domain architecture, bZIP spans 202 to 254 (DPKRVKRILANRQSAQRSRVRKLQYISELERSVTSLQTEVSVLSPRVAFLDHQ). Positions 204-223 (KRVKRILANRQSAQRSRVRK) are basic motif. The tract at residues 230-251 (LERSVTSLQTEVSVLSPRVAFL) is leucine-zipper. The segment covering 304–313 (KMENNVSDQS) has biased composition (polar residues). The disordered stretch occupies residues 304-329 (KMENNVSDQSPADIKPSVEKEQLLNV). The span at 319–329 (PSVEKEQLLNV) shows a compositional bias: basic and acidic residues.

Forms heterodimers with BZIP18, BZIP43 and VIP1/BZIP51.

The protein localises to the nucleus. Functionally, transcriptional activator. The protein is Basic leucine zipper 61 of Arabidopsis thaliana (Mouse-ear cress).